The chain runs to 360 residues: Probable L-asparaginase 3 (360 aa).

The N-terminal stretch at 1 to 16 (MWSSIISFLFFSVALC) is a signal peptide. 3 N-linked (GlcNAc...) asparagine glycosylation sites follow: Asn-27, Asn-35, and Asn-40. The Asparaginase/glutaminase domain maps to 39–359 (PNVTIFAMGG…QNITDIFSLE (321 aa)). The active-site O-isoaspartyl threonine intermediate is the Thr-49. A glycan (N-linked (GlcNAc...) asparagine) is linked at Asn-82. Ser-96 contributes to the substrate binding site. Residue Asn-106 is glycosylated (N-linked (GlcNAc...) asparagine). Substrate is bound at residue 129 to 130 (TD). 5 N-linked (GlcNAc...) asparagine glycosylation sites follow: Asn-144, Asn-179, Asn-246, Asn-302, and Asn-351.

The protein belongs to the asparaginase 1 family.

The protein localises to the secreted. The protein resides in the cell wall. It carries out the reaction L-asparagine + H2O = L-aspartate + NH4(+). In Schizosaccharomyces pombe (strain 972 / ATCC 24843) (Fission yeast), this protein is Probable L-asparaginase 3.